Here is a 350-residue protein sequence, read N- to C-terminus: Biotin synthase (350 aa).

Residues 63–281 form the Radical SAM core domain; sequence GDIELATLLS…IAVARITMPK (219 aa). [4Fe-4S] cluster contacts are provided by Cys-78, Cys-82, and Cys-85. [2Fe-2S] cluster contacts are provided by Cys-122, Cys-153, Cys-213, and Arg-285.

The protein belongs to the radical SAM superfamily. Biotin synthase family. In terms of assembly, homodimer. Requires [4Fe-4S] cluster as cofactor. It depends on [2Fe-2S] cluster as a cofactor.

The catalysed reaction is (4R,5S)-dethiobiotin + (sulfur carrier)-SH + 2 reduced [2Fe-2S]-[ferredoxin] + 2 S-adenosyl-L-methionine = (sulfur carrier)-H + biotin + 2 5'-deoxyadenosine + 2 L-methionine + 2 oxidized [2Fe-2S]-[ferredoxin]. The protein operates within cofactor biosynthesis; biotin biosynthesis; biotin from 7,8-diaminononanoate: step 2/2. In terms of biological role, catalyzes the conversion of dethiobiotin (DTB) to biotin by the insertion of a sulfur atom into dethiobiotin via a radical-based mechanism. The polypeptide is Biotin synthase (Acidovorax ebreus (strain TPSY) (Diaphorobacter sp. (strain TPSY))).